Reading from the N-terminus, the 257-residue chain is Thiazole synthase (257 aa).

The active-site Schiff-base intermediate with DXP is Lys97. 1-deoxy-D-xylulose 5-phosphate is bound by residues Gly158, 184–185 (AG), and 206–207 (NT).

This sequence belongs to the ThiG family. Homotetramer. Forms heterodimers with either ThiH or ThiS.

The protein localises to the cytoplasm. The catalysed reaction is [ThiS sulfur-carrier protein]-C-terminal-Gly-aminoethanethioate + 2-iminoacetate + 1-deoxy-D-xylulose 5-phosphate = [ThiS sulfur-carrier protein]-C-terminal Gly-Gly + 2-[(2R,5Z)-2-carboxy-4-methylthiazol-5(2H)-ylidene]ethyl phosphate + 2 H2O + H(+). The protein operates within cofactor biosynthesis; thiamine diphosphate biosynthesis. Functionally, catalyzes the rearrangement of 1-deoxy-D-xylulose 5-phosphate (DXP) to produce the thiazole phosphate moiety of thiamine. Sulfur is provided by the thiocarboxylate moiety of the carrier protein ThiS. In vitro, sulfur can be provided by H(2)S. The protein is Thiazole synthase of Phocaeicola vulgatus (strain ATCC 8482 / DSM 1447 / JCM 5826 / CCUG 4940 / NBRC 14291 / NCTC 11154) (Bacteroides vulgatus).